The sequence spans 509 residues: NADH-quinone oxidoreductase subunit M (509 aa).

The chain crosses the membrane as a helical span at residues 1-21 (MLLPWLILIPFIGGFLCWQTE). The Cytoplasmic segment spans residues 22-29 (RFGVKVPR). The helical transmembrane segment at 30-50 (WIALITMGLTLALSLQLWLQG) threads the bilayer. Over 51–82 (GYSLTQSAGIPQWQSEFDMPWIPRFGISIHLA) the chain is Periplasmic. The helical transmembrane segment at 83-103 (IDGLSLLMVVLTGLLGVLAVL) threads the bilayer. Residues 104 to 121 (CSWKEIEKYQGFFHLNLM) lie on the Cytoplasmic side of the membrane. A helical membrane pass occupies residues 122–142 (WILGGVIGVFLAIDMFLFFFF). At 143 to 173 (WEMMLVPMYFLIALWGHKASDGKTRITAATK) the chain is on the periplasmic side. A helical membrane pass occupies residues 174-194 (FFIYTQASGLVMLIAILALVF). The Cytoplasmic portion of the chain corresponds to 195–221 (VHYNATGVWTFNYEELLNTPMSSGVEY). A helical membrane pass occupies residues 222–242 (LLMLGFFIAFAVKMPVVPLHG). Residues 243–258 (WLPDAHSQAPTAGSVD) lie on the Periplasmic side of the membrane. Residues 259–279 (LAGILLKTAAYGLLRFSLPLF) traverse the membrane as a helical segment. Residues 280 to 285 (PNASAE) lie on the Cytoplasmic side of the membrane. A helical membrane pass occupies residues 286–306 (FAPIAMWLGVIGIFYGAWMAF). At 307-313 (AQTDIKR) the chain is on the periplasmic side. Residues 314 to 334 (LIAYTSVSHMGFVLIAIYTGS) form a helical membrane-spanning segment. Residues 335–339 (QLAYQ) lie on the Cytoplasmic side of the membrane. The chain crosses the membrane as a helical span at residues 340 to 360 (GAVIQMIAHGLSAAGLFILCG). Residues 361 to 382 (QLYERIHTRDMRMMGGLWSKMK) are Periplasmic-facing. The next 2 helical transmembrane spans lie at 383-403 (WLPALSLFFAVATLGMPGTGN) and 404-424 (FVGEFMILFGSFQVVPVITVI). Position 425 (Ser-425) is a topological domain, periplasmic. Residues 426 to 446 (TFGLVFASVYSLAMLHRAYFG) form a helical membrane-spanning segment. At 447–464 (KAKSQIASQELPGMSLRE) the chain is on the cytoplasmic side. Residues 465–485 (LFMILLLVVLLVLLGFYPQPI) traverse the membrane as a helical segment. Residues 486–509 (LDTSHSAIGNIQQWFVNSVTTTRP) are Periplasmic-facing.

Belongs to the complex I subunit 4 family. Composed of 13 different subunits. Subunits NuoA, H, J, K, L, M, N constitute the membrane sector of the complex.

The protein localises to the cell inner membrane. The catalysed reaction is a quinone + NADH + 5 H(+)(in) = a quinol + NAD(+) + 4 H(+)(out). In terms of biological role, NDH-1 shuttles electrons from NADH, via FMN and iron-sulfur (Fe-S) centers, to quinones in the respiratory chain. The immediate electron acceptor for the enzyme in this species is believed to be ubiquinone. Couples the redox reaction to proton translocation (for every two electrons transferred, four hydrogen ions are translocated across the cytoplasmic membrane), and thus conserves the redox energy in a proton gradient. In Escherichia coli O157:H7, this protein is NADH-quinone oxidoreductase subunit M (nuoM).